The chain runs to 249 residues: NAD kinase (249 aa).

The Proton acceptor role is filled by aspartate 45. Residues 45–46 (DG), arginine 50, 110–111 (NE), aspartate 138, and 149–154 (SGWGMS) each bind NAD(+).

It belongs to the NAD kinase family. A divalent metal cation is required as a cofactor.

The protein localises to the cytoplasm. It catalyses the reaction NAD(+) + ATP = ADP + NADP(+) + H(+). Its function is as follows. Involved in the regulation of the intracellular balance of NAD and NADP, and is a key enzyme in the biosynthesis of NADP. Catalyzes specifically the phosphorylation on 2'-hydroxyl of the adenosine moiety of NAD to yield NADP. The sequence is that of NAD kinase from Saccharolobus solfataricus (strain ATCC 35092 / DSM 1617 / JCM 11322 / P2) (Sulfolobus solfataricus).